Here is a 574-residue protein sequence, read N- to C-terminus: Frizzled and smoothened-like protein G (574 aa).

An N-terminal signal peptide occupies residues 1 to 19 (MKSIIFITFFIFFLKKLNG). Over 20–246 (LPNGYGVGLV…EKWNQIENLS (227 aa)) the chain is Extracellular. In terms of domain architecture, FZ spans 30–181 (DPNGQCMNYI…GLYEVPCFNP (152 aa)). Intrachain disulfides connect Cys-35/Cys-109, Cys-48/Cys-102, Cys-91/Cys-138, and Cys-127/Cys-178. N-linked (GlcNAc...) asparagine glycans are attached at residues Asn-119, Asn-161, Asn-187, Asn-206, Asn-233, and Asn-244. A helical transmembrane segment spans residues 247–267 (KVLSTISFVCSIYNILSFGIL). At 268–273 (KKKKTK) the chain is on the cytoplasmic side. A helical membrane pass occupies residues 274–294 (YTICISALSASVALINLGDII). The Extracellular segment spans residues 295–324 (KIGVGYEKVLCPEPGRFATQVDDPLCGLTA). The helical transmembrane segment at 325-345 (ALFHVGICSTVLWTTTMAIYL) threads the bilayer. The Cytoplasmic portion of the chain corresponds to 346–358 (YSAIKNIKLFKFR). A helical transmembrane segment spans residues 359–379 (YFIIFNTGFSLTSLIIAASAS). Over 380–401 (KFEAGTGSIECWIRDRWYSICL) the chain is Extracellular. The helical transmembrane segment at 402 to 422 (FWLPCGICLLIGTICIASVIV) threads the bilayer. Residues 423–445 (EIYKVSKNIKLSESETIMRQIKP) are Cytoplasmic-facing. The chain crosses the membrane as a helical span at residues 446 to 466 (IISVILVSGSFTYLFIIFFDI). Residues 467–502 (ERNFGGYRSAVTDYVLCLLNSTDNGIECHTSGPSYN) lie on the Extracellular side of the membrane. Asn-486 carries an N-linked (GlcNAc...) asparagine glycan. Residues 503-523 (PYFMFYFFMRFFGILFFLIYG) traverse the membrane as a helical segment. Residues 524–574 (TSKNARDSWYELFIKIKVSLSETSSTISNNSGGGSSQQKQQQQNEIKLEKI) are Cytoplasmic-facing. The span at 550-568 (ISNNSGGGSSQQKQQQQNE) shows a compositional bias: low complexity. Residues 550 to 574 (ISNNSGGGSSQQKQQQQNEIKLEKI) are disordered.

The protein belongs to the G-protein coupled receptor Fz/Smo family.

The protein localises to the membrane. The polypeptide is Frizzled and smoothened-like protein G (fslG) (Dictyostelium discoideum (Social amoeba)).